We begin with the raw amino-acid sequence, 363 residues long: TBC1 domain family member whacked (363 aa).

Residues 77 to 265 form the Rab-GAP TBC domain; that stretch reads GIPKSVRPKA…RVWDCFLAEG (189 aa). The disordered stretch occupies residues 335 to 363; it reads KARRAKQKAQQEAESSGSGNGHRRNMPTL.

Its subcellular location is the apical cell membrane. It is found in the cytoplasmic vesicle. The protein localises to the cell projection. The protein resides in the filopodium. Functionally, essential for ensuring the polarized growth of tracheal seamless tubes. During seamless tube morphogenesis, likely to act as a GTPase-activating protein (GAP) for Rab35 to regulate vesicle trafficking from the recycling endosomes to the lumenal apical membrane to ensure the polarized dynein motor complex-dependent growth of seamless tubes along the proximodistal axis in tracheal terminal cells. When the terminal branch lumen is growing, Rab35-GTP is active and likely directs the transport of apical membrane vesicles from the soma to the distal tip of elongating terminal cell branches thus providing a continuous supply of apical membrane components as the lumen grows. Whereas when Rab35-GDP is inactivated, presumably by this GAP, apical membrane vesicles are transported to a central location adjacent to the terminal cell nucleus. The protein is TBC1 domain family member whacked of Drosophila melanogaster (Fruit fly).